The primary structure comprises 104 residues: uncharacterized protein (104 aa).

The protein belongs to the BolA/IbaG family.

This is an uncharacterized protein from Buchnera aphidicola subsp. Acyrthosiphon pisum (strain APS) (Acyrthosiphon pisum symbiotic bacterium).